A 395-amino-acid polypeptide reads, in one-letter code: Ribosomal RNA small subunit methyltransferase H (395 aa).

Residues 101–103 (GGH), aspartate 120, tyrosine 147, aspartate 171, and glutamine 178 each bind S-adenosyl-L-methionine.

It belongs to the methyltransferase superfamily. RsmH family.

It is found in the cytoplasm. It catalyses the reaction cytidine(1402) in 16S rRNA + S-adenosyl-L-methionine = N(4)-methylcytidine(1402) in 16S rRNA + S-adenosyl-L-homocysteine + H(+). Its function is as follows. Specifically methylates the N4 position of cytidine in position 1402 (C1402) of 16S rRNA. The sequence is that of Ribosomal RNA small subunit methyltransferase H from Mycobacterium marinum (strain ATCC BAA-535 / M).